Consider the following 334-residue polypeptide: Methionine adenosyltransferase 2 subunit beta (334 aa).

NADP(+)-binding positions include 37 to 40 (TGLL), 60 to 62 (FRR), 71 to 72 (NL), C93, R97, Y159, and L185. T309 is modified (phosphothreonine). The segment at 319-334 (LWPFLIDKRWRQTVFH) is required for interaction with MAT2A.

Belongs to the dTDP-4-dehydrorhamnose reductase family. MAT2B subfamily. Heterotrimer; composed of a catalytic MAT2A homodimer that binds one regulatory MAT2B chain. Heterohexamer; composed of a central, catalytic MAT2A homotetramer flanked on either side by a regulatory MAT2B chain. NADP binding increases the affinity for MAT2A.

It participates in amino-acid biosynthesis; S-adenosyl-L-methionine biosynthesis; S-adenosyl-L-methionine from L-methionine: step 1/1. Regulatory subunit of S-adenosylmethionine synthetase 2, an enzyme that catalyzes the formation of S-adenosylmethionine from methionine and ATP. Regulates MAT2A catalytic activity by changing its kinetic properties, increasing its affinity for L-methionine. Can bind NADP (in vitro). The chain is Methionine adenosyltransferase 2 subunit beta (Mat2b) from Mus musculus (Mouse).